Consider the following 391-residue polypeptide: 2-deoxy-scyllo-inosose synthase (391 aa).

NAD(+) is bound by residues Asp42, 73–76, 105–109, 129–130, 140–142, and 151–152; these read EVHK, GVTGN, TT, SLK, and KN. Lys142 is a catalytic residue. A Co(2+)-binding site is contributed by Glu184. The active site involves Glu244. His247 and His263 together coordinate Co(2+).

Belongs to the sugar phosphate cyclases superfamily. DOI synthase family. The cofactor is NAD(+). Co(2+) is required as a cofactor.

The enzyme catalyses D-glucose 6-phosphate = 2-deoxy-L-scyllo-inosose + phosphate. It participates in metabolic intermediate biosynthesis; 2-deoxystreptamine biosynthesis; 2-deoxystreptamine from D-glucose 6-phosphate: step 1/4. Its pathway is antibiotic biosynthesis; ribostamycin biosynthesis. Functionally, catalyzes the intramolecular carbocycle formation from D-glucose-6-phosphate to 2-deoxy-scyllo-inosose (DOI). The protein is 2-deoxy-scyllo-inosose synthase (rbmA) of Streptomyces ribosidificus.